Reading from the N-terminus, the 387-residue chain is Homoserine O-succinyltransferase (387 aa).

The AB hydrolase-1 domain maps to 45-354 (NAVLVCHALN…DAPHGHDAFL (310 aa)). Catalysis depends on S151, which acts as the Nucleophile. R221 provides a ligand contact to substrate. Catalysis depends on residues D317 and H350. A substrate-binding site is contributed by D351.

It belongs to the AB hydrolase superfamily. MetX family. As to quaternary structure, homodimer.

The protein localises to the cytoplasm. The enzyme catalyses L-homoserine + succinyl-CoA = O-succinyl-L-homoserine + CoA. The protein operates within amino-acid biosynthesis; L-methionine biosynthesis via de novo pathway; O-succinyl-L-homoserine from L-homoserine: step 1/1. Transfers a succinyl group from succinyl-CoA to L-homoserine, forming succinyl-L-homoserine. The chain is Homoserine O-succinyltransferase from Methylibium petroleiphilum (strain ATCC BAA-1232 / LMG 22953 / PM1).